A 533-amino-acid polypeptide reads, in one-letter code: 2-succinyl-5-enolpyruvyl-6-hydroxy-3-cyclohexene-1-carboxylate synthase (533 aa).

Belongs to the TPP enzyme family. MenD subfamily. As to quaternary structure, homodimer. Mg(2+) is required as a cofactor. The cofactor is Mn(2+). Thiamine diphosphate serves as cofactor.

The enzyme catalyses isochorismate + 2-oxoglutarate + H(+) = 5-enolpyruvoyl-6-hydroxy-2-succinyl-cyclohex-3-ene-1-carboxylate + CO2. It participates in quinol/quinone metabolism; 1,4-dihydroxy-2-naphthoate biosynthesis; 1,4-dihydroxy-2-naphthoate from chorismate: step 2/7. Its pathway is quinol/quinone metabolism; menaquinone biosynthesis. Its function is as follows. Catalyzes the thiamine diphosphate-dependent decarboxylation of 2-oxoglutarate and the subsequent addition of the resulting succinic semialdehyde-thiamine pyrophosphate anion to isochorismate to yield 2-succinyl-5-enolpyruvyl-6-hydroxy-3-cyclohexene-1-carboxylate (SEPHCHC). The sequence is that of 2-succinyl-5-enolpyruvyl-6-hydroxy-3-cyclohexene-1-carboxylate synthase from Akkermansia muciniphila (strain ATCC BAA-835 / DSM 22959 / JCM 33894 / BCRC 81048 / CCUG 64013 / CIP 107961 / Muc).